We begin with the raw amino-acid sequence, 132 residues long: mRNA interferase toxin YafO (132 aa).

As to quaternary structure, probably forms a complex with the antitoxin YafN which inhibits the mRNA interferase activity.

Functionally, toxic component of a type II toxin-antitoxin (TA) system. A translation-dependent mRNA interferase. Overexpression causes cessation of cell growth and inhibits cell proliferation via inhibition of translation; this blockage is overcome by subsequent expression of antitoxin YafN. Overexpression causes cleavage of a number of mRNAs in a ribosome-dependent fashion. YafO binding to the 50S ribosomal subunit in the translation complex induces mRNA cleavage 3' to the region protected by the ribosome; YafO alone is not able to digest mRNA. The polypeptide is mRNA interferase toxin YafO (yafO) (Escherichia coli (strain K12)).